Here is a 153-residue protein sequence, read N- to C-terminus: Heavy metal-associated isoprenylated plant protein 26 (153 aa).

The 65-residue stretch at 25 to 89 (LQTVEIKVKM…MSHRTGKKVE (65 aa)) folds into the HMA domain. A metal cation contacts are provided by cysteine 36 and cysteine 39. Cysteine 150 carries the cysteine methyl ester modification. Residue cysteine 150 is the site of S-farnesyl cysteine attachment. Positions 151 to 153 (VVM) are cleaved as a propeptide — removed in mature form.

Belongs to the HIPP family. In terms of assembly, interacts with ZHD11/HB29 and ACBP2 (via ankyrin repeats). May also interact with HB21. In terms of tissue distribution, expressed in roots, stems and flowers. Lower expression in siliques and leaves. Expressed in the vascular tissues. Detected in lateral roots, shoot apical meristem, petals of unopened flowers and weak expression in leaf vasculature.

The protein localises to the nucleus membrane. Its subcellular location is the cell membrane. Its function is as follows. Heavy-metal-binding protein. Binds lead, cadmium and copper. May be involved in heavy-metal transport. May be involved in cadmium transport and play a role in cadmium detoxification. This is Heavy metal-associated isoprenylated plant protein 26 from Arabidopsis thaliana (Mouse-ear cress).